Consider the following 287-residue polypeptide: Glutamate racemase (287 aa).

Residues 32–33 (DS) and 64–65 (YG) contribute to the substrate site. Residue cysteine 96 is the Proton donor/acceptor of the active site. A substrate-binding site is contributed by 97–98 (NT). Cysteine 208 (proton donor/acceptor) is an active-site residue. 209-210 (TH) provides a ligand contact to substrate.

It belongs to the aspartate/glutamate racemases family.

It carries out the reaction L-glutamate = D-glutamate. It functions in the pathway cell wall biogenesis; peptidoglycan biosynthesis. Its function is as follows. Provides the (R)-glutamate required for cell wall biosynthesis. The sequence is that of Glutamate racemase from Serratia proteamaculans (strain 568).